Here is a 294-residue protein sequence, read N- to C-terminus: Nucleophosmin (294 aa).

Methionine 1 bears the N-acetylmethionine mark. The segment at 1–117 (MEDSMDMDMS…PVHISGQHLV (117 aa)) is necessary for interaction with APEX1. The segment at 1 to 186 (MEDSMDMDMS…DDDDFDDEEA (186 aa)) is required for interaction with SENP3. Serine 4 carries the phosphoserine; by PLK1 and PLK2 modification. Serine 10 is modified (phosphoserine). A Glycyl lysine isopeptide (Lys-Gly) (interchain with G-Cter in SUMO2) cross-link involves residue lysine 27. An N6-acetyllysine; alternate modification is found at lysine 32. Lysine 32 is covalently cross-linked (Glycyl lysine isopeptide (Lys-Gly) (interchain with G-Cter in SUMO1); alternate). Lysine 32 participates in a covalent cross-link: Glycyl lysine isopeptide (Lys-Gly) (interchain with G-Cter in SUMO2); alternate. Serine 43 is subject to Phosphoserine. Tyrosine 67 bears the Phosphotyrosine mark. Serine 70 carries the phosphoserine modification. Residues threonine 75 and threonine 95 each carry the phosphothreonine modification. The span at 120-132 (EEDAESEDEEEED) shows a compositional bias: acidic residues. Positions 120–247 (EEDAESEDEE…PKGPSSVEDI (128 aa)) are disordered. At serine 125 the chain carries Phosphoserine; by CDK2. 2 positions are modified to phosphoserine: serine 137 and serine 139. Residue lysine 141 forms a Glycyl lysine isopeptide (Lys-Gly) (interchain with G-Cter in SUMO2) linkage. Lysine 150 is subject to N6-acetyllysine; alternate. Residue lysine 150 forms a Glycyl lysine isopeptide (Lys-Gly) (interchain with G-Cter in SUMO2); alternate linkage. The Nuclear localization signal signature appears at 152–157 (PQKKVK). Lysine 154 is subject to N6-acetyllysine. Residues 161 to 187 (DEDDDDDDEEDDDEDDDDDDFDDEEAE) are compositionally biased toward acidic residues. The interaction with NOP2 stretch occupies residues 187–215 (EEKAPVKKSIRDTPAKNAQKSNQNGKDSK). Over residues 188 to 200 (EKAPVKKSIRDTP) the composition is skewed to basic and acidic residues. The short motif at 191–197 (PVKKSIR) is the Nuclear localization signal element. Threonine 199 bears the Phosphothreonine; by CDK1, CDK2 and CDK6 mark. Positions 202-222 (KNAQKSNQNGKDSKPSSTPRS) are enriched in polar residues. At serine 207 the chain carries ADP-ribosylserine. Residue lysine 212 is modified to N6-acetyllysine. Lysine 215 participates in a covalent cross-link: Glycyl lysine isopeptide (Lys-Gly) (interchain with G-Cter in SUMO2). A Phosphothreonine; by CDK1 modification is found at threonine 219. The segment covering 223-235 (KGQESFKKQEKTP) has biased composition (basic and acidic residues). Serine 227 is subject to Phosphoserine. Lysine 229 is modified (N6-acetyllysine). N6-acetyllysine; alternate is present on lysine 230. Residue lysine 230 forms a Glycyl lysine isopeptide (Lys-Gly) (interchain with G-Cter in SUMO); alternate linkage. Phosphothreonine; by CDK1 is present on residues threonine 234 and threonine 237. Residues serine 242 and serine 243 each carry the phosphoserine modification. The required for nucleolar localization stretch occupies residues 243–294 (SVEDIKAKMQASIEKGGSLPKVEAKFINYVKNCFRMTDQEAIQDLWQWRKSL). Lysine 248 participates in a covalent cross-link: Glycyl lysine isopeptide (Lys-Gly) (interchain with G-Cter in SUMO1); alternate. Glycyl lysine isopeptide (Lys-Gly) (interchain with G-Cter in SUMO2); alternate cross-links involve residues lysine 248 and lysine 250. N6-acetyllysine; alternate is present on lysine 250. A Phosphoserine modification is found at serine 254. Lysine 257 carries the N6-acetyllysine; alternate modification. Lysine 257 is covalently cross-linked (Glycyl lysine isopeptide (Lys-Gly) (interchain with G-Cter in SUMO1); alternate). Lysine 257 is covalently cross-linked (Glycyl lysine isopeptide (Lys-Gly) (interchain with G-Cter in SUMO2); alternate). Lysine 257 is subject to N6-acetyllysine. Residue serine 260 is modified to Phosphoserine. Residues lysine 263, lysine 267, and lysine 273 each participate in a glycyl lysine isopeptide (Lys-Gly) (interchain with G-Cter in SUMO2); alternate cross-link. Residue lysine 263 forms a Glycyl lysine isopeptide (Lys-Gly) (interchain with G-Cter in SUMO); alternate linkage. An N6-acetyllysine; alternate mark is found at lysine 267 and lysine 273. A Glycyl lysine isopeptide (Lys-Gly) (interchain with G-Cter in SUMO1); alternate cross-link involves residue lysine 267. Lysine 267 is modified (N6-succinyllysine; alternate). Threonine 279 carries the phosphothreonine modification. The residue at position 292 (lysine 292) is an N6-acetyllysine.

The protein belongs to the nucleoplasmin family. As to quaternary structure, decamer formed by two pentameric rings associated in a head-to-head fashion. Disulfide-linked dimers under certain conditions. The SWAP complex consists of NPM1, NCL, PARP1 and SWAP70. Interacts with NSUN2 and SENP3. Interacts with the methylated form of RPS10. Interacts (via N-terminal domain) with APEX1; the interaction is RNA-dependent and decreases in hydrogen peroxide-damaged cells. Interacts with isoform 1 of NEK2. Interacts with ROCK2 and BRCA2. Interacts with RPGR. Interacts with CENPW. Interacts with EIF2AK2/PKR. Interacts with CEBPA (isoform 4). Interacts with DDX31; this interaction prevents interaction between NPM1 and HDM2. Interacts with MYC; competitive with NOP53. Interacts with NOP53; the interaction is direct and competitive with MYC. Interacts with LRRC34. Interacts with RRP1B. Interacts with NPM3. Interacts with ALKBH2. Interacts with TTF1 (via C-terminal region). Interacts with NOP2. Interacts with ARID3C (via REKLES DOMAIN); the interaction mediates ARID3C nuclear shuttling. (Microbial infection) Interacts with hepatitis delta virus S-HDAg. In terms of assembly, (Microbial infection) Interacts with HTLV1 Rex protein (via N-terminal nuclear localization signal). In terms of processing, acetylated at C-terminal lysine residues, thereby increasing affinity to histones. Post-translationally, ADP-ribosylated. Phosphorylated at Ser-4 by PLK1 and PLK2. Phosphorylation at Ser-4 by PLK2 in S phase is required for centriole duplication and is sufficient to trigger centriole replication. Phosphorylation at Ser-4 by PLK1 takes place during mitosis. Phosphorylated by CDK2 at Ser-125 and Thr-199. Phosphorylation at Thr-199 may trigger initiation of centrosome duplication. Phosphorylated by CDK1 at Thr-199, Thr-219, Thr-234 and Thr-237 during cell mitosis. When these four sites are phosphorated, RNA-binding activity seem to be abolished. May be phosphorylated at Ser-70 by NEK2. The Thr-199 phosphorylated form has higher affinity for ROCK2. CDK6 triggers Thr-199 phosphorylation when complexed to Kaposi's sarcoma herpesvirus (KSHV) V-cyclin, leading to viral reactivation by reducing viral LANA levels. In terms of processing, sumoylated by ARF. Post-translationally, ubiquitinated. Ubiquitination leads to proteasomal degradation. Deubiquitinated by USP36.

It localises to the nucleus. It is found in the nucleolus. The protein resides in the nucleoplasm. Its subcellular location is the cytoplasm. The protein localises to the cytoskeleton. It localises to the microtubule organizing center. It is found in the centrosome. Involved in diverse cellular processes such as ribosome biogenesis, centrosome duplication, protein chaperoning, histone assembly, cell proliferation, and regulation of tumor suppressors p53/TP53 and ARF. Binds ribosome presumably to drive ribosome nuclear export. Associated with nucleolar ribonucleoprotein structures and bind single-stranded nucleic acids. Acts as a chaperonin for the core histones H3, H2B and H4. Stimulates APEX1 endonuclease activity on apurinic/apyrimidinic (AP) double-stranded DNA but inhibits APEX1 endonuclease activity on AP single-stranded RNA. May exert a control of APEX1 endonuclease activity within nucleoli devoted to repair AP on rDNA and the removal of oxidized rRNA molecules. In concert with BRCA2, regulates centrosome duplication. Regulates centriole duplication: phosphorylation by PLK2 is able to trigger centriole replication. Negatively regulates the activation of EIF2AK2/PKR and suppresses apoptosis through inhibition of EIF2AK2/PKR autophosphorylation. Antagonizes the inhibitory effect of ATF5 on cell proliferation and relieves ATF5-induced G2/M blockade. In complex with MYC enhances the transcription of MYC target genes. May act as chaperonin or cotransporter in the nucleolar localization of transcription termination factor TTF1. This is Nucleophosmin from Homo sapiens (Human).